The following is a 383-amino-acid chain: Deoxyhypusine synthase-like protein (383 aa).

It belongs to the deoxyhypusine synthase family.

This Nostoc sp. (strain PCC 7120 / SAG 25.82 / UTEX 2576) protein is Deoxyhypusine synthase-like protein.